The following is a 592-amino-acid chain: Cytosolic purine 5'-nucleotidase (592 aa).

The segment covering 1–15 (MAENNNNNNNNNNNN) has biased composition (low complexity). Residues 1–37 (MAENNNNNNNNNNNNVSTPPHQKPHLTTGLRTSSSGL) form a disordered region. The active-site Nucleophile is the D122. D122 and D124 together coordinate IMP. The Mg(2+) site is built by D122 and D124. Catalysis depends on D124, which acts as the Proton donor. N226 is an ATP binding site. The interval 252-273 (LTEEVADEQQQMNSPPLSSLGS) is disordered. The segment covering 259 to 273 (EQQQMNSPPLSSLGS) has biased composition (polar residues). 7 residues coordinate IMP: R299, D303, K312, T347, N348, S349, and K385. D444 is a binding site for Mg(2+). 2 residues coordinate ATP: Q547 and R550.

This sequence belongs to the 5'(3')-deoxyribonucleotidase family. Homotetramer. Mg(2+) serves as cofactor.

Its subcellular location is the cytoplasm. It is found in the cytosol. The catalysed reaction is a ribonucleoside 5'-phosphate + H2O = a ribonucleoside + phosphate. It catalyses the reaction a 2'-deoxyribonucleoside + a ribonucleoside 5'-phosphate = a ribonucleoside + a 2'-deoxyribonucleoside 5'-phosphate. In terms of biological role, broad specificity cytosolic 5'-nucleotidase that catalyzes the dephosphorylation of 6-hydroxypurine nucleoside 5'-monophosphates. In addition, possesses a phosphotransferase activity by which it can transfer a phosphate from a donor nucleoside monophosphate to an acceptor nucleoside. Through these activities regulates the purine nucleoside/nucleotide pools within the cell. The chain is Cytosolic purine 5'-nucleotidase (nt5c2) from Dictyostelium discoideum (Social amoeba).